Here is a 457-residue protein sequence, read N- to C-terminus: MDHLPIFCQLRDRDCLIVGGGDVAERKARLLLEAGARLTVNALTFIPQFTVWANEGMLTLVEGPFDETLLDSCWLAIAATDDDTVNQRVSDAAESRRIFCNVVDAPKAASFIMPSIIDRSPLMVAVSSGGTSPVLARLLREKLESLLPQHLGQVARYAGQLRARVKKQFATMGERRRFWEKFFVNDRLAQSLANADEKAVNATTERLFSEPLDHRGEVVLVGAGPGDAGLLTLKGLQQIQQADIVVYDRLVSDDIMNLVRRDADRVFVGKRAGYHCVPQEEINQILLREAQKGKRVVRLKGGDPFIFGRGGEELETLCHAGIPFSVVPGITAASGCSAYSGIPLTHRDYAQSVRLVTGHLKTGGELDWENLAAEKQTLVFYMGLNQAATIQEKLIAFGMQADMPVALVENGTSVKQRVVHGVLTQLGELAQQVESPALIIVGRVVALRDKLNWFSNH.

The interval L4–A202 is precorrin-2 dehydrogenase /sirohydrochlorin ferrochelatase. Residues D22–V23 and L43–T44 contribute to the NAD(+) site. The residue at position 128 (S128) is a Phosphoserine. The segment at G216 to R448 is uroporphyrinogen-III C-methyltransferase. Residue P225 coordinates S-adenosyl-L-methionine. The active-site Proton acceptor is D248. K270 acts as the Proton donor in catalysis. Residues G301 to D303, I306, T331 to A332, M382, G411, and A437 contribute to the S-adenosyl-L-methionine site.

It in the N-terminal section; belongs to the precorrin-2 dehydrogenase / sirohydrochlorin ferrochelatase family. The protein in the C-terminal section; belongs to the precorrin methyltransferase family. In terms of assembly, homodimer.

The catalysed reaction is uroporphyrinogen III + 2 S-adenosyl-L-methionine = precorrin-2 + 2 S-adenosyl-L-homocysteine + H(+). It carries out the reaction precorrin-2 + NAD(+) = sirohydrochlorin + NADH + 2 H(+). The enzyme catalyses siroheme + 2 H(+) = sirohydrochlorin + Fe(2+). It functions in the pathway cofactor biosynthesis; adenosylcobalamin biosynthesis; precorrin-2 from uroporphyrinogen III: step 1/1. The protein operates within cofactor biosynthesis; adenosylcobalamin biosynthesis; sirohydrochlorin from precorrin-2: step 1/1. Its pathway is porphyrin-containing compound metabolism; siroheme biosynthesis; precorrin-2 from uroporphyrinogen III: step 1/1. It participates in porphyrin-containing compound metabolism; siroheme biosynthesis; siroheme from sirohydrochlorin: step 1/1. It functions in the pathway porphyrin-containing compound metabolism; siroheme biosynthesis; sirohydrochlorin from precorrin-2: step 1/1. Its function is as follows. Multifunctional enzyme that catalyzes the SAM-dependent methylations of uroporphyrinogen III at position C-2 and C-7 to form precorrin-2 via precorrin-1. Then it catalyzes the NAD-dependent ring dehydrogenation of precorrin-2 to yield sirohydrochlorin. Finally, it catalyzes the ferrochelation of sirohydrochlorin to yield siroheme. In Salmonella typhimurium (strain LT2 / SGSC1412 / ATCC 700720), this protein is Siroheme synthase.